A 156-amino-acid polypeptide reads, in one-letter code: Putative pre-16S rRNA nuclease (156 aa).

The protein belongs to the YqgF nuclease family.

The protein resides in the cytoplasm. In terms of biological role, could be a nuclease involved in processing of the 5'-end of pre-16S rRNA. This Ehrlichia ruminantium (strain Gardel) protein is Putative pre-16S rRNA nuclease.